A 1040-amino-acid chain; its full sequence is Multidrug resistance protein MdtB (1040 aa).

Transmembrane regions (helical) follow at residues 25 to 45 (LLMAAILLAGIIGYRFLPVAA), 347 to 367 (LMLAIALVVMIIYLFLRNIPA), 369 to 389 (IIPGVAVPLSLIGTFAVMVFL), 396 to 416 (LTLMALTIATGFVVDDAIVVI), 440 to 460 (IGFTIISLTFSLIAVLIPLLF), 472 to 492 (FAVTLAVAILISAVVSLTLTP), 537 to 557 (WLTLSVAFATLLLSVMLWIVI), 863 to 883 (LGSTVWLIVAAVVAMYIVLGV), 888 to 908 (FIHPITILSTLPTAGVGALLA), 910 to 930 (IIAGSELDIIAIIGIILLIGI), 968 to 988 (ILMTTLAALLGALPLMLSTGV), and 998 to 1018 (IAMVGGLLVSQVLTLFTTPVI).

The protein belongs to the resistance-nodulation-cell division (RND) (TC 2.A.6) family. MdtB subfamily. As to quaternary structure, part of a tripartite efflux system composed of MdtA, MdtB and MdtC. MdtB forms a heteromultimer with MdtC.

The protein localises to the cell inner membrane. The polypeptide is Multidrug resistance protein MdtB (Salmonella choleraesuis (strain SC-B67)).